A 256-amino-acid chain; its full sequence is Thiazole synthase (256 aa).

The Schiff-base intermediate with DXP role is filled by K98. Residues G159, 185-186 (AG), and 207-208 (NT) each bind 1-deoxy-D-xylulose 5-phosphate.

The protein belongs to the ThiG family. Homotetramer. Forms heterodimers with either ThiH or ThiS.

The protein resides in the cytoplasm. It catalyses the reaction [ThiS sulfur-carrier protein]-C-terminal-Gly-aminoethanethioate + 2-iminoacetate + 1-deoxy-D-xylulose 5-phosphate = [ThiS sulfur-carrier protein]-C-terminal Gly-Gly + 2-[(2R,5Z)-2-carboxy-4-methylthiazol-5(2H)-ylidene]ethyl phosphate + 2 H2O + H(+). The protein operates within cofactor biosynthesis; thiamine diphosphate biosynthesis. Functionally, catalyzes the rearrangement of 1-deoxy-D-xylulose 5-phosphate (DXP) to produce the thiazole phosphate moiety of thiamine. Sulfur is provided by the thiocarboxylate moiety of the carrier protein ThiS. In vitro, sulfur can be provided by H(2)S. The sequence is that of Thiazole synthase from Syntrophobacter fumaroxidans (strain DSM 10017 / MPOB).